A 204-amino-acid chain; its full sequence is Imidazoleglycerol-phosphate dehydratase (204 aa).

This sequence belongs to the imidazoleglycerol-phosphate dehydratase family.

It is found in the cytoplasm. The enzyme catalyses D-erythro-1-(imidazol-4-yl)glycerol 3-phosphate = 3-(imidazol-4-yl)-2-oxopropyl phosphate + H2O. It functions in the pathway amino-acid biosynthesis; L-histidine biosynthesis; L-histidine from 5-phospho-alpha-D-ribose 1-diphosphate: step 6/9. In Rhodococcus erythropolis (strain PR4 / NBRC 100887), this protein is Imidazoleglycerol-phosphate dehydratase.